The chain runs to 898 residues: MGIVDYLVAAVSFRTLPTTFVAVLVYLAIFISVLITDELPATPKDQRGLNLTQAYSDLRQIAARPHPYNSHANDVVHDFILTRLQDATAGYDYAHVFDDKVSNGSWSSRNNSVYFEGTNILVKVDGHDADKSGALFSAHYDSVSTAPGATDDGMGVATLLQLVEYYVKHRPQRTAVFNINNGEEDWLNGAHAFLEHPWSNLTDTFLNLEGASSGGRPLLFRATATAPVRAFREKYVTHPHGNVLSSDAFARGVVRSGTDYSVYVDGRGMDGADLAFYKGRSRYHTRYDAVQYTDGGVRSLWAMMEAAQGVSGALLSSEAVHGDKGGAPVYFDLFGQALIVFPLSAMITFNIVFLVVGPIMLALLVTFDIVARHRRQEMIGGGYEEQGFFARAWTSFKSFRWVGGFWKHAKFWVALAVTVGLQVLLCVGYLYINPLIAYSSSHIVLLSFLSLAYLSTYLVHNIPSPTDTYGSHLPEQQKQAALFQLYFFTWILLLAATVVGAKLSVGSFYILSLWNAVLFAACAIGSIAGLLSSHTVEGDASYGSRRRIRGVRYDREGEEEGVESETAPTEVTPLIAQPITVVAPGGKEGEEVSGAIGWWFVQFVLSVPAVVILVSQLALLMLAATEQTLADGSPAVTVYGGASLMSVLAILPLAPFACKLHRRVAYVALVVLIASTAYAWLVFPFSERAPLKVFFQQQVDLDANITETRITGHPAYLRQAIAALPSAGGAPLNCTADDAKAGLQTCGWTPPPALEPSVIALDFNVSRSEGQNQARFEIAETDTRACRVYFDQAVTRFQVHGGTEGVQKGFEIPEEGVRELRLWSRTWDRTWVVDVDREGSALTGRVACEWSEYASGSLGVETRTRIPAYEEVLTFLPSWAVASKFADGLVEGYKAFAV.

Residues 1–14 are Cytoplasmic-facing; the sequence is MGIVDYLVAAVSFR. Residues 15-35 traverse the membrane as a helical segment; it reads TLPTTFVAVLVYLAIFISVLI. Over 36-342 the chain is Vacuolar; sequence TDELPATPKD…LFGQALIVFP (307 aa). Residues N50, N103, and N110 are each glycosylated (N-linked (GlcNAc...) asparagine). Residues H139 and D151 each coordinate Zn(2+). E183 acts as the Proton acceptor in catalysis. Residue E184 participates in Zn(2+) binding. N-linked (GlcNAc...) asparagine glycosylation occurs at N200. Zn(2+) is bound by residues E209 and H284. A helical membrane pass occupies residues 343–365; sequence LSAMITFNIVFLVVGPIMLALLV. Residues 366–411 lie on the Cytoplasmic side of the membrane; that stretch reads TFDIVARHRRQEMIGGGYEEQGFFARAWTSFKSFRWVGGFWKHAKF. The chain crosses the membrane as a helical span at residues 412-432; it reads WVALAVTVGLQVLLCVGYLYI. Position 433 (N433) is a topological domain, vacuolar. Residues 434-454 form a helical membrane-spanning segment; sequence PLIAYSSSHIVLLSFLSLAYL. Residues 455–479 lie on the Cytoplasmic side of the membrane; sequence STYLVHNIPSPTDTYGSHLPEQQKQ. A helical membrane pass occupies residues 480-500; it reads AALFQLYFFTWILLLAATVVG. At 501 to 509 the chain is on the vacuolar side; sequence AKLSVGSFY. Residues 510-530 form a helical membrane-spanning segment; sequence ILSLWNAVLFAACAIGSIAGL. Residues 531–593 are Cytoplasmic-facing; that stretch reads LSSHTVEGDA…PGGKEGEEVS (63 aa). The helical transmembrane segment at 594–614 threads the bilayer; sequence GAIGWWFVQFVLSVPAVVILV. The Vacuolar segment spans residues 615-635; sequence SQLALLMLAATEQTLADGSPA. A helical transmembrane segment spans residues 636 to 656; the sequence is VTVYGGASLMSVLAILPLAPF. At 657–664 the chain is on the cytoplasmic side; that stretch reads ACKLHRRV. The helical transmembrane segment at 665–685 threads the bilayer; sequence AYVALVVLIASTAYAWLVFPF. At 686–898 the chain is on the vacuolar side; sequence SERAPLKVFF…LVEGYKAFAV (213 aa). Residues N704, N733, and N764 are each glycosylated (N-linked (GlcNAc...) asparagine).

Belongs to the peptidase M28 family. It depends on Zn(2+) as a cofactor.

The protein localises to the vacuole membrane. In terms of biological role, may be involved in vacuolar sorting and osmoregulation. This Schizophyllum commune (strain H4-8 / FGSC 9210) (Split gill fungus) protein is Vacuolar membrane protease.